The primary structure comprises 1492 residues: Copper-transporting ATPase 1 (1492 aa).

Residues 1–645 are Cytoplasmic-facing; the sequence is MEPNMDANSI…KREIKQWRGS (645 aa). 2 HMA domains span residues 8 to 74 and 85 to 151; these read NSIT…FDAL and TNTV…LDMG. Positions 18, 19, and 22 each coordinate Cu(+). T152 bears the Phosphothreonine mark. One can recognise an HMA 3 domain in the interval 171–237; it reads VLLKMRVEGM…QIEAVGFPAF (67 aa). Cu(+) contacts are provided by C182 and C185. The residue at position 270 (S270) is a Phosphoserine. In terms of domain architecture, HMA 4 spans 277 to 343; it reads SAITFTIDGM…AIEAVSPGQY (67 aa). Cu(+)-binding residues include C288 and C291. T327 carries the phosphothreonine modification. Phosphoserine is present on residues S339, S353, S357, and S362. HMA domains are found at residues 377–443, 480–546, and 556–622; these read QEVV…FDAV, NKCY…FGAV, and GILE…FEAS. Residues C388, C391, C491, C494, C567, and C570 each contribute to the Cu(+) site. A helical transmembrane segment spans residues 646–667; it reads FLVSLFFCIPVMGLMIYMMVMD. The Extracellular portion of the chain corresponds to 668–706; sequence HHLATLNHNQNMSNEEMINMHSSMFLERQILPGLSIMNL. N678 carries an N-linked (GlcNAc...) asparagine glycan. The chain crosses the membrane as a helical span at residues 707 to 726; it reads LSLLLCLPVQFCGGWYFYIQ. Residues 727–733 lie on the Cytoplasmic side of the membrane; sequence AYKALRH. Residues 734 to 754 traverse the membrane as a helical segment; sequence KTANMDVLIVLATTIAFAYSL. Residues 755-773 are Extracellular-facing; that stretch reads VILLVAMYERAKVNPITFF. A helical transmembrane segment spans residues 774 to 794; it reads DTPPMLFVFIALGRWLEHIAK. Topologically, residues 795–927 are cytoplasmic; it reads GKTSEALAKL…SKAPIQQFAD (133 aa). Residues 928 to 951 traverse the membrane as a helical segment; the sequence is KLSGYFVPFIVLVSIVTLLVWIII. Residues 952–981 are Extracellular-facing; it reads GFQNFEIVEAYFPGYNRSISRTETIIRFAF. The chain crosses the membrane as a helical span at residues 982–1003; sequence QASITVLCIACPCSLGLATPTA. Over 1004–1348 the chain is Cytoplasmic; that stretch reads VMVGTGVGAQ…LSRKTVKRIR (345 aa). The 4-aspartylphosphate intermediate role is filled by D1036. An ATP-binding site is contributed by E1073. T1204 carries the post-translational modification Phosphothreonine. Residues D1293 and D1297 each coordinate Mg(2+). A helical membrane pass occupies residues 1349–1366; sequence INFVFALIYNLIGIPIAA. Residues 1367–1377 are Extracellular-facing; the sequence is GVFLPIGLVLQ. The helical transmembrane segment at 1378–1397 threads the bilayer; it reads PWMGSAAMAASSVSVVLSSL. Topologically, residues 1398 to 1492 are cytoplasmic; it reads FLKLYRKPTY…DFREDDDTTL (95 aa). Phosphoserine occurs at positions 1422, 1424, 1452, 1455, and 1458. Positions 1459-1460 match the Endocytosis signal motif; the sequence is LL. S1461, S1465, S1468, and S1478 each carry phosphoserine. Residues 1478-1492 are PDZD11-binding; it reads SLLVGDFREDDDTTL. Positions 1479–1480 match the Endocytosis signal motif; the sequence is LL.

Belongs to the cation transport ATPase (P-type) (TC 3.A.3) family. Type IB subfamily. In terms of assembly, monomer. Interacts with PDZD11. Interacts with ATOX1 and COMMD1. Interacts with TYRP1. Directly interacts with SOD3; this interaction is copper-dependent and is required for SOD3 activity. As to expression, expressed in hippocampal neuron (at protein level). Expressed in anterior pituitary gland (at protein level).

It localises to the golgi apparatus. The protein resides in the trans-Golgi network membrane. The protein localises to the cell membrane. It is found in the melanosome membrane. Its subcellular location is the early endosome membrane. It localises to the cell projection. The protein resides in the axon. The protein localises to the dendrite. It is found in the postsynaptic density. The catalysed reaction is Cu(+)(in) + ATP + H2O = Cu(+)(out) + ADP + phosphate + H(+). Its function is as follows. ATP-driven copper (Cu(+)) ion pump that plays an important role in intracellular copper ion homeostasis. Within a catalytic cycle, acquires Cu(+) ion from donor protein on the cytoplasmic side of the membrane and delivers it to acceptor protein on the lumenal side. The transfer of Cu(+) ion across the membrane is coupled to ATP hydrolysis and is associated with a transient phosphorylation that shifts the pump conformation from inward-facing to outward-facing state. Under physiological conditions, at low cytosolic copper concentration, it is localized at the trans-Golgi network (TGN) where it transfers Cu(+) ions to cuproenzymes of the secretory pathway. Upon elevated cytosolic copper concentrations, it relocalizes to the plasma membrane where it is responsible for the export of excess Cu(+) ions. May play a dual role in neuron function and survival by regulating cooper efflux and neuronal transmission at the synapse as well as by supplying Cu(+) ions to enzymes such as PAM, TYR and SOD3. In the melanosomes of pigmented cells, provides copper cofactor to TYR to form an active TYR holoenzyme for melanin biosynthesis. This Rattus norvegicus (Rat) protein is Copper-transporting ATPase 1.